The following is a 230-amino-acid chain: ATP synthase subunit a (230 aa).

Transmembrane regions (helical) follow at residues 16-36, 73-93, 106-126, 142-162, 165-185, and 192-212; these read LVLF…WLSI, WVSA…LGLL, TYSI…YLAF, LIPF…IALG, LAAN…AIWT, and IASI…GVAC.

It belongs to the ATPase A chain family. As to quaternary structure, F-type ATPases have 2 components, CF(1) - the catalytic core - and CF(0) - the membrane proton channel. CF(1) has five subunits: alpha(3), beta(3), gamma(1), delta(1), epsilon(1). CF(0) has three main subunits: a, b and c.

The protein resides in the mitochondrion inner membrane. Its function is as follows. Mitochondrial membrane ATP synthase (F(1)F(0) ATP synthase or Complex V) produces ATP from ADP in the presence of a proton gradient across the membrane which is generated by electron transport complexes of the respiratory chain. F-type ATPases consist of two structural domains, F(1) - containing the extramembraneous catalytic core and F(0) - containing the membrane proton channel, linked together by a central stalk and a peripheral stalk. During catalysis, ATP synthesis in the catalytic domain of F(1) is coupled via a rotary mechanism of the central stalk subunits to proton translocation. Key component of the proton channel; it may play a direct role in the translocation of protons across the membrane. This Patiria pectinifera (Starfish) protein is ATP synthase subunit a (ATP6).